Here is a 607-residue protein sequence, read N- to C-terminus: MNKKIIILIYLIFIKSIVGQNPVWIGGSGCNLFTDSSCWSPSTSPLTTDIVTMGVDSTQTVVDGDITITTLINNNLTLGGVEMSSTISLEIIDTSLIVSGAFSMATNSRLSLSLSDSYANSLVSGSATRNAVNVLMNLQSMQTLMVGSSFTMTGNSVLDVNRSISTINGVFTMNDDTSLFMYSKQNGDSKFTVGNSVLNDASSLNFQGQSFIFFNQTNLPSGLVLNDQSKIVAIDADNVKISGVVTLNDQSSIQLTSSRLYLDSLVTATTSSILVNNSTLSILQSIPTTFSPASAVFKGSVFTIKSNCTIQSPITMIDSVYSFNQSHTLASQFTGSNVYMIMDAAILNAGNYYDCSGCSLSMRNSIANFDSYENQGDLILSSSKLNSNAPITSNTGSIFGYYGELNQALTVESGSLGVYNEKTRLFVNGNVIVESGAKIQFYLSSPLDFSWLNTSGSLDVQSGTIIEIYVYIEILNNGSMEVIKTSNGFVTPLSTDNVKLYTYDPDNDVITDFSTTGGCEYSISITNTSVLVHTDYACQQAIITLGTDGISKGSLAGISVSMVALACFVSLGVWWKTSKKNDQRNDSQVLTNFSQNKSDDIDVERKL.

Positions 1–19 are cleaved as a signal peptide; it reads MNKKIIILIYLIFIKSIVG. Residues 20–554 are Extracellular-facing; it reads QNPVWIGGSG…LGTDGISKGS (535 aa). Asn75, Asn161, Asn215, Asn276, Asn277, Asn307, Asn324, Asn453, Asn477, and Asn527 each carry an N-linked (GlcNAc...) asparagine glycan. The chain crosses the membrane as a helical span at residues 555–575; the sequence is LAGISVSMVALACFVSLGVWW. Over 576–607 the chain is Cytoplasmic; the sequence is KTSKKNDQRNDSQVLTNFSQNKSDDIDVERKL.

Forms a complex with psiF/dicA.

The protein resides in the membrane. Its subcellular location is the secreted. In terms of biological role, component of a complex that acts as a quorum sensing protein regulating discoidin gene expression during growth and development. Its function in the complex is unclear as it has no ability to induce discoidin during growth and development by itself. This chain is Discoidin-inducing complex subunit B (dicB), found in Dictyostelium discoideum (Social amoeba).